A 319-amino-acid chain; its full sequence is G-protein coupled receptor 55 (319 aa).

At 1 to 21 (MSQQNTSGDCLFDGVNELMKT) the chain is on the extracellular side. A glycan (N-linked (GlcNAc...) asparagine) is linked at asparagine 5. The helical transmembrane segment at 22–42 (LQFAVHIPTFVLGLLLNLLAI) threads the bilayer. The Cytoplasmic segment spans residues 43-58 (HGFSTFLKNRWPDYAA). Residues 59-79 (TSIYMINLAVFDLLLVLSLPF) form a helical membrane-spanning segment. Residues 80 to 94 (KMVLSQVQSPFPSLC) lie on the Extracellular side of the membrane. The helical transmembrane segment at 95–115 (TLVECLYFVSMYGSVFTICFI) threads the bilayer. Over 116 to 137 (SMDRFLAIRYPLLVSHLRSPRK) the chain is Cytoplasmic. The helical transmembrane segment at 138–158 (IFGICCTIWVLVWTGSIPIYS) threads the bilayer. At 159–180 (FHGKVEKYMCFHNMSDDTWSAK) the chain is on the extracellular side. Residue asparagine 171 is glycosylated (N-linked (GlcNAc...) asparagine). Residues 181–201 (VFFPLEVFGFLLPMGIMGFCC) form a helical membrane-spanning segment. Residues 202 to 231 (SRSIHILLGRRDHTQDWVQQKACIYSIAAS) are Cytoplasmic-facing. The chain crosses the membrane as a helical span at residues 232–252 (LAVFVVSFLPVHLGFFLQFLV). Residues 253–271 (RNSFIVECRAKQSISFFLQ) lie on the Extracellular side of the membrane. A helical membrane pass occupies residues 272–292 (LSMCFSNVNCCLDVFCYYFVI). Over 293–319 (KEFRMNIRAHRPSRVQLVLQDTTISRG) the chain is Cytoplasmic.

The protein belongs to the G-protein coupled receptor 1 family. In terms of tissue distribution, expressed in the caudate nucleus and putamen, but not detected in the hippocampus, thalamus, pons cerebellum, frontal cortex of the brain or in the liver. Expressed in osteoclasts and osteoblasts. Higly expressed in macrophages and B-cells.

It is found in the cell membrane. G-protein coupled receptor that binds to several ligands including 2-arachidonoyl lysophosphatidylinositol or lysophosphatidylglucoside with high affinity, leading to rapid and transient activation of numerous intracellular signaling pathways. Induces the Ca(2+) release from intracellular stores via ERK, the heterotrimeric G protein GNA13 and RHOA leading to morphological changes including cell rounding and stress fiber formation. In macrophages, acts downstream of lysophosphatidylglucoside to inhibit the translocation of the phospholipid-transporting ABCA1 to plasma membrane and subsequent cholesterol efflux leading to lipid accumulation and foam cell formation. The polypeptide is G-protein coupled receptor 55 (GPR55) (Homo sapiens (Human)).